The chain runs to 202 residues: Venom allergen 5 (202 aa).

Intrachain disulfides connect Cys4–Cys16, Cys8–Cys101, and Cys26–Cys94. Phosphotyrosine is present on Tyr107. A glycan (N-linked (Glc) (glycation) lysine) is linked at Lys138. Residues Cys168 and Cys185 are joined by a disulfide bond.

It belongs to the CRISP family. As to expression, expressed by the venom gland.

The protein resides in the secreted. In terms of biological role, does not show toxicity when intravenously injected into mice tail. This chain is Venom allergen 5, found in Vespa velutina (Asian yellow-legged hornet).